Reading from the N-terminus, the 338-residue chain is Probable protein S-acyltransferase 1 (338 aa).

Helical transmembrane passes span 32–52 (DASS…AFSI) and 68–88 (LTLI…FLTS). Residues 142–192 (KFCDTCQLYRPPRAFHCSICNNCVQRFDHHCPWVGQCIALRNYPFFVCFLS) form the DHHC domain. The S-palmitoyl cysteine intermediate role is filled by cysteine 172. Transmembrane regions (helical) follow at residues 186–206 (FFVC…VFSW) and 225–245 (ILGV…GLTV). The segment at 319 to 338 (FGPKDTKMSSGKSDSEARER) is disordered. Over residues 320-338 (GPKDTKMSSGKSDSEARER) the composition is skewed to basic and acidic residues.

Belongs to the DHHC palmitoyltransferase family.

The protein localises to the endosome membrane. The enzyme catalyses L-cysteinyl-[protein] + hexadecanoyl-CoA = S-hexadecanoyl-L-cysteinyl-[protein] + CoA. Palmitoyl acyltransferase. This chain is Probable protein S-acyltransferase 1 (PAT01), found in Arabidopsis thaliana (Mouse-ear cress).